Consider the following 71-residue polypeptide: UPF0346 protein BCB4264_A2283 (71 aa).

Belongs to the UPF0346 family.

The protein is UPF0346 protein BCB4264_A2283 of Bacillus cereus (strain B4264).